Here is a 314-residue protein sequence, read N- to C-terminus: 4-hydroxy-3-methylbut-2-enyl diphosphate reductase (314 aa).

Cysteine 12 is a [4Fe-4S] cluster binding site. (2E)-4-hydroxy-3-methylbut-2-enyl diphosphate-binding residues include histidine 43 and histidine 81. Dimethylallyl diphosphate contacts are provided by histidine 43 and histidine 81. Histidine 43 and histidine 81 together coordinate isopentenyl diphosphate. [4Fe-4S] cluster is bound at residue cysteine 103. Histidine 131 provides a ligand contact to (2E)-4-hydroxy-3-methylbut-2-enyl diphosphate. Histidine 131 contributes to the dimethylallyl diphosphate binding site. An isopentenyl diphosphate-binding site is contributed by histidine 131. Glutamate 133 serves as the catalytic Proton donor. Threonine 170 is a binding site for (2E)-4-hydroxy-3-methylbut-2-enyl diphosphate. A [4Fe-4S] cluster-binding site is contributed by cysteine 198. Residues serine 226, asparagine 228, and serine 271 each coordinate (2E)-4-hydroxy-3-methylbut-2-enyl diphosphate. Positions 226, 228, and 271 each coordinate dimethylallyl diphosphate. Positions 226, 228, and 271 each coordinate isopentenyl diphosphate.

The protein belongs to the IspH family. It depends on [4Fe-4S] cluster as a cofactor.

It carries out the reaction isopentenyl diphosphate + 2 oxidized [2Fe-2S]-[ferredoxin] + H2O = (2E)-4-hydroxy-3-methylbut-2-enyl diphosphate + 2 reduced [2Fe-2S]-[ferredoxin] + 2 H(+). The enzyme catalyses dimethylallyl diphosphate + 2 oxidized [2Fe-2S]-[ferredoxin] + H2O = (2E)-4-hydroxy-3-methylbut-2-enyl diphosphate + 2 reduced [2Fe-2S]-[ferredoxin] + 2 H(+). The protein operates within isoprenoid biosynthesis; dimethylallyl diphosphate biosynthesis; dimethylallyl diphosphate from (2E)-4-hydroxy-3-methylbutenyl diphosphate: step 1/1. It participates in isoprenoid biosynthesis; isopentenyl diphosphate biosynthesis via DXP pathway; isopentenyl diphosphate from 1-deoxy-D-xylulose 5-phosphate: step 6/6. Catalyzes the conversion of 1-hydroxy-2-methyl-2-(E)-butenyl 4-diphosphate (HMBPP) into a mixture of isopentenyl diphosphate (IPP) and dimethylallyl diphosphate (DMAPP). Acts in the terminal step of the DOXP/MEP pathway for isoprenoid precursor biosynthesis. This chain is 4-hydroxy-3-methylbut-2-enyl diphosphate reductase, found in Shouchella clausii (strain KSM-K16) (Alkalihalobacillus clausii).